A 633-amino-acid polypeptide reads, in one-letter code: ATP-dependent RNA helicase mrh4, mitochondrial (633 aa).

A mitochondrion-targeting transit peptide spans 1–38; the sequence is MNRLGRLSLPLRPQVCLLCQTQATMSSPLAGWQAVRSM. The interval 50–115 is disordered; that stretch reads MVLSSNVDKS…KQKPDSPLYK (66 aa). The span at 52 to 63 shows a compositional bias: polar residues; it reads LSSNVDKSSLKQ. Basic and acidic residues predominate over residues 98 to 109; it reads RSGDSEDDKQKP. A Q motif motif is present at residues 142–175; the sequence is SSFDQFPLLPVVRHSISSQALSRTGDIVPTPIQR. Residues 195–407 form the Helicase ATP-binding domain; the sequence is SDHEPNFEQY…RKRYPDIRRL (213 aa). An ATP-binding site is contributed by 208–215; that stretch reads AETGSGKT. The DEAD box motif lies at 354-357; that stretch reads DEAD. In terms of domain architecture, Helicase C-terminal spans 458–633; the sequence is FLAQAGPKVK…EGMFRGQALI (176 aa).

It belongs to the DEAD box helicase family. MRH4 subfamily.

It localises to the mitochondrion. The catalysed reaction is ATP + H2O = ADP + phosphate + H(+). Its function is as follows. ATP-binding RNA helicase involved in mitochondrial RNA metabolism. Required for maintenance of mitochondrial DNA. The polypeptide is ATP-dependent RNA helicase mrh4, mitochondrial (mrh4) (Aspergillus niger (strain ATCC MYA-4892 / CBS 513.88 / FGSC A1513)).